Here is a 299-residue protein sequence, read N- to C-terminus: UPF0603 protein OsI_019212, chloroplastic (299 aa).

Composition is skewed to low complexity over residues 1 to 14 (METL…LSPL) and 22 to 36 (ASPA…SSPA). A chloroplast-targeting transit peptide spans 1–41 (METLLSPSTLLSPLRGSKKKPASPAASASSSSSSPARSVVS). Disordered regions lie at residues 1-60 (METL…WRGD) and 244-265 (PDPG…TKEE). A thylakoid-targeting transit peptide spans 42–98 (CALRRQQPPPQAVAAWRGDGGRGGGVGSWATFLQHGLAAAALSLAISMAPAPAPAVA). A compositionally biased stretch (basic and acidic residues) spans 252 to 265 (KDNKRESNFKTKEE). A helical membrane pass occupies residues 276–296 (VVGGLLVIAFVVPMAQYYAYI).

This sequence belongs to the UPF0603 family.

The protein resides in the plastid. It is found in the chloroplast thylakoid membrane. In Oryza sativa subsp. indica (Rice), this protein is UPF0603 protein OsI_019212, chloroplastic.